Here is a 515-residue protein sequence, read N- to C-terminus: Forkhead box protein H1 (515 aa).

The segment at 55 to 103 (YREGGTWSPDRGSMHGLSPGTQEGSCTQAEGTKDSLGGDETLSRKSKKK) is disordered. The span at 73-84 (PGTQEGSCTQAE) shows a compositional bias: polar residues. A DNA-binding region (fork-head) is located at residues 110 to 206 (KPPYSYLAMI…MKLQNTALTR (97 aa)). The disordered stretch occupies residues 307–399 (YPQSKPTRNG…EPPKKMPLLS (93 aa)). Low complexity predominate over residues 322-339 (SASHSTYSSSSSSISTIS). A compositionally biased stretch (polar residues) spans 375–388 (STPSSDTDAGNYSP). The SMAD-interaction domain (SID) stretch occupies residues 377 to 503 (PSSDTDAGNY…PSFLGQCLGS (127 aa)). The short motif at 402-406 (LPTSY) is the Fast/FoxH1 motif 1 (FM1) element. The Fast/FoxH1 motif 2 (FM2) motif lies at 412 to 418 (PNVVAPP). The short motif at 467–488 (LDNMLKTVPPNKSVFDVLTSHP) is the SMAD-interaction motif (SIM) element.

In terms of assembly, ARF1 contains 2 smad2s, 1 smad4 and 1 foxh1/fast-1 protein. Interaction with smad4 is most likely indirect through interaction with the MH2 domain of smad2. Binds to the MH2 domain of smad3, which can incorporate into the ARF1 complex. The ARF1 and ARF2 complexes are activated by distinct TGF-beta family members; formation of ARF1 is promoted by activin. Interacts (via Fork-head domain) with gtf2ird1/wbscr11 (via repeats 4-5).

It localises to the nucleus. Transcriptional activator. Recognizes and binds to the DNA sequence 5'-TGT[GT][GT]ATT-3'. Upon TGF-beta induction, forms a transcriptionally active complex with smad2 and smad4 called activin-responsive factor 1 (ARF1), which binds a site on the mix-B/mix.2 promoter called the activin response element (ARE). Binds to activated smads and the ARE with much lower affinity than fast3. Necessary for the first steps in mesoderm specification, directly inducing mesodermal genes. Acts with fast3 to control the convergent extension movements of gastrulation. Binds to the proximal element (PE) of the gsc gene and cooperates with gtf2ird1/wbscr11 and SMAD proteins to regulate gsc transcription. The sequence is that of Forkhead box protein H1 from Xenopus tropicalis (Western clawed frog).